The sequence spans 324 residues: tRNA(Ile)-lysidine synthase (324 aa).

ATP is bound at residue 33 to 38; sequence SGGPDS.

Belongs to the tRNA(Ile)-lysidine synthase family.

Its subcellular location is the cytoplasm. The enzyme catalyses cytidine(34) in tRNA(Ile2) + L-lysine + ATP = lysidine(34) in tRNA(Ile2) + AMP + diphosphate + H(+). Functionally, ligates lysine onto the cytidine present at position 34 of the AUA codon-specific tRNA(Ile) that contains the anticodon CAU, in an ATP-dependent manner. Cytidine is converted to lysidine, thus changing the amino acid specificity of the tRNA from methionine to isoleucine. This is tRNA(Ile)-lysidine synthase from Thermobifida fusca (strain YX).